We begin with the raw amino-acid sequence, 203 residues long: NADH-quinone oxidoreductase subunit C (203 aa).

This sequence belongs to the complex I 30 kDa subunit family. As to quaternary structure, NDH-1 is composed of 14 different subunits. Subunits NuoB, C, D, E, F, and G constitute the peripheral sector of the complex.

It is found in the cell inner membrane. The catalysed reaction is a quinone + NADH + 5 H(+)(in) = a quinol + NAD(+) + 4 H(+)(out). In terms of biological role, NDH-1 shuttles electrons from NADH, via FMN and iron-sulfur (Fe-S) centers, to quinones in the respiratory chain. The immediate electron acceptor for the enzyme in this species is believed to be ubiquinone. Couples the redox reaction to proton translocation (for every two electrons transferred, four hydrogen ions are translocated across the cytoplasmic membrane), and thus conserves the redox energy in a proton gradient. This chain is NADH-quinone oxidoreductase subunit C, found in Delftia acidovorans (strain DSM 14801 / SPH-1).